The primary structure comprises 450 residues: Glutamyl-tRNA(Gln) amidotransferase subunit A, mitochondrial (450 aa).

Residues Lys-47 and Ser-122 each act as charge relay system in the active site. Catalysis depends on Ser-146, which acts as the Acyl-ester intermediate.

This sequence belongs to the amidase family. GatA subfamily. Subunit of the heterotrimeric GatFAB amidotransferase (AdT) complex, composed of A, B and F subunits.

Its subcellular location is the mitochondrion. The enzyme catalyses L-glutamyl-tRNA(Gln) + L-glutamine + ATP + H2O = L-glutaminyl-tRNA(Gln) + L-glutamate + ADP + phosphate + H(+). Allows the formation of correctly charged Gln-tRNA(Gln) through the transamidation of misacylated Glu-tRNA(Gln) in the mitochondria. The reaction takes place in the presence of glutamine and ATP through an activated gamma-phospho-Glu-tRNA(Gln). The sequence is that of Glutamyl-tRNA(Gln) amidotransferase subunit A, mitochondrial from Candida albicans (strain WO-1) (Yeast).